Reading from the N-terminus, the 177-residue chain is ATP synthase subunit delta (177 aa).

It belongs to the ATPase delta chain family. As to quaternary structure, F-type ATPases have 2 components, F(1) - the catalytic core - and F(0) - the membrane proton channel. F(1) has five subunits: alpha(3), beta(3), gamma(1), delta(1), epsilon(1). F(0) has three main subunits: a(1), b(2) and c(10-14). The alpha and beta chains form an alternating ring which encloses part of the gamma chain. F(1) is attached to F(0) by a central stalk formed by the gamma and epsilon chains, while a peripheral stalk is formed by the delta and b chains.

The protein resides in the cell membrane. F(1)F(0) ATP synthase produces ATP from ADP in the presence of a proton or sodium gradient. F-type ATPases consist of two structural domains, F(1) containing the extramembraneous catalytic core and F(0) containing the membrane proton channel, linked together by a central stalk and a peripheral stalk. During catalysis, ATP synthesis in the catalytic domain of F(1) is coupled via a rotary mechanism of the central stalk subunits to proton translocation. Functionally, this protein is part of the stalk that links CF(0) to CF(1). It either transmits conformational changes from CF(0) to CF(1) or is implicated in proton conduction. The polypeptide is ATP synthase subunit delta (Exiguobacterium sibiricum (strain DSM 17290 / CCUG 55495 / CIP 109462 / JCM 13490 / 255-15)).